The following is a 117-amino-acid chain: Large ribosomal subunit protein bL19 (117 aa).

This sequence belongs to the bacterial ribosomal protein bL19 family.

In terms of biological role, this protein is located at the 30S-50S ribosomal subunit interface and may play a role in the structure and function of the aminoacyl-tRNA binding site. This is Large ribosomal subunit protein bL19 from Phocaeicola vulgatus (strain ATCC 8482 / DSM 1447 / JCM 5826 / CCUG 4940 / NBRC 14291 / NCTC 11154) (Bacteroides vulgatus).